A 477-amino-acid chain; its full sequence is Ribulose bisphosphate carboxylase large chain (477 aa).

A propeptide spanning residues 1–2 (MS) is cleaved from the precursor. Pro-3 is subject to N-acetylproline. Position 14 is an N6,N6,N6-trimethyllysine (Lys-14). Residues Asn-123 and Thr-173 each contribute to the substrate site. Lys-175 functions as the Proton acceptor in the catalytic mechanism. Lys-177 contributes to the substrate binding site. Residues Lys-201, Asp-203, and Glu-204 each contribute to the Mg(2+) site. Lys-201 carries the N6-carboxylysine modification. His-294 acts as the Proton acceptor in catalysis. Substrate contacts are provided by Arg-295, His-327, and Ser-379.

This sequence belongs to the RuBisCO large chain family. Type I subfamily. In terms of assembly, heterohexadecamer of 8 large chains and 8 small chains; disulfide-linked. The disulfide link is formed within the large subunit homodimers. Requires Mg(2+) as cofactor. The disulfide bond which can form in the large chain dimeric partners within the hexadecamer appears to be associated with oxidative stress and protein turnover.

The protein localises to the plastid. The protein resides in the chloroplast. The catalysed reaction is 2 (2R)-3-phosphoglycerate + 2 H(+) = D-ribulose 1,5-bisphosphate + CO2 + H2O. It carries out the reaction D-ribulose 1,5-bisphosphate + O2 = 2-phosphoglycolate + (2R)-3-phosphoglycerate + 2 H(+). RuBisCO catalyzes two reactions: the carboxylation of D-ribulose 1,5-bisphosphate, the primary event in carbon dioxide fixation, as well as the oxidative fragmentation of the pentose substrate in the photorespiration process. Both reactions occur simultaneously and in competition at the same active site. This is Ribulose bisphosphate carboxylase large chain from Nicotiana sylvestris (Wood tobacco).